A 163-amino-acid polypeptide reads, in one-letter code: Nucleotide-binding protein Dde_2479 (163 aa).

The protein belongs to the YajQ family.

Nucleotide-binding protein. The sequence is that of Nucleotide-binding protein Dde_2479 from Oleidesulfovibrio alaskensis (strain ATCC BAA-1058 / DSM 17464 / G20) (Desulfovibrio alaskensis).